The sequence spans 114 residues: Anti-adapter protein IraM (114 aa).

It belongs to the IraM/RssC family.

The protein localises to the cytoplasm. In terms of biological role, involved in the stabilization of the sigma stress factor RpoS. The polypeptide is Anti-adapter protein IraM (Citrobacter koseri (strain ATCC BAA-895 / CDC 4225-83 / SGSC4696)).